A 58-amino-acid polypeptide reads, in one-letter code: DQNCDIGNITSQCEMQHQNCDDANGCNTIIEECKTSMVERCQNQEFESASGSTTLGPQ.

3 disulfide bridges follow: Cys4/Cys41, Cys13/Cys33, and Cys20/Cys26. A glycan (N-linked (GlcNAc...) asparagine) is linked at Asn8.

In terms of tissue distribution, produced by the albumen gland of the egg cordons.

The protein localises to the secreted. Its function is as follows. Water-borne pheromone that attract the marine mollusk Aplysia into breeding aggregations and coordinate male and female reproductive behavior within the aggregation. This Aplysia fasciata (Mottled sea hare) protein is Attractin (ATT).